The sequence spans 189 residues: GTPase KRas (189 aa).

At M1 the chain carries N-acetylmethionine; in GTPase KRas; alternate. T2 carries the N-acetylthreonine; in GTPase KRas, N-terminally processed modification. GTP-binding positions include 10 to 18 (GAGGVGKSA), 29 to 35 (VDEYDPT), and 59 to 60 (AG). The Effector region signature appears at 32-40 (YDPTIEDSY). Residue T35 is glycosylated ((Microbial infection) O-linked (Glc) threonine; by P.sordellii toxin TcsL). At K104 the chain carries N6-acetyllysine. 116 to 119 (NKCD) lines the GTP pocket. Residues 166 to 185 (YRLKKISKEEKTPGCVKIKK) are hypervariable region. K170 is covalently cross-linked (Glycyl lysine isopeptide (Lys-Gly) (interchain with G-Cter in ubiquitin)). A lipid anchor (S-palmitoyl cysteine) is attached at C180. N6-palmitoyl lysine attachment occurs at residues K182, K184, and K185. Cysteine methyl ester is present on C186. C186 is lipidated: S-farnesyl cysteine. Positions 187 to 189 (IIM) are cleaved as a propeptide — removed in mature form.

This sequence belongs to the small GTPase superfamily. Ras family. As to quaternary structure, interacts with PHLPP. Interacts (active GTP-bound form preferentially) with RGS14. Interacts (when farnesylated) with PDE6D; this promotes dissociation from the cell membrane. Interacts with SOS1. Interacts (when farnesylated) with GPR31. Interacts with RAP1GDS1. Interacts (active GTP-bound form) with both SHOC2 and PP1c (all isoforms) to form a tertiary complex; SHOC2 and PP1c preferably bind M-Ras/MRAS, but they also bind K-Ras/KRAS, N-Ras/NRAS and H-Ras/HRAS. Interacts (GTP-bound form) with MAPKAP1/SIN1; inhibiting K-Ras/KRAS activity. Interacts with GPR31; in a farnelysation-dependent manner. Acetylation at Lys-104 prevents interaction with guanine nucleotide exchange factors (GEFs). In terms of processing, palmitoylated at Lys-182, Lys-184 and Lys-185. Palmitoylation on lysine residues is promoted by palmitoylation at Cys-180. Lysine-depalmitoylation by SIRT2 promotes its localization to endomembranes in endocytic pathways. Post-translationally, ubiquitinated by the BCR(LZTR1) E3 ubiquitin ligase complex at Lys-170 in a non-degradative manner, leading to inhibit Ras signaling by decreasing Ras association with membranes. (Microbial infection) Glucosylated at Thr-35 by P.sordellii toxin TcsL.

The protein resides in the cell membrane. Its subcellular location is the endomembrane system. It is found in the cytoplasm. It localises to the cytosol. The enzyme catalyses GTP + H2O = GDP + phosphate + H(+). Alternates between an inactive form bound to GDP and an active form bound to GTP. Activated by a guanine nucleotide-exchange factor (GEF) and inactivated by a GTPase-activating protein (GAP). Interaction with SOS1 promotes exchange of bound GDP to GTP. Functionally, ras proteins bind GDP/GTP and possess intrinsic GTPase activity. Plays an important role in the regulation of cell proliferation. Plays a role in promoting oncogenic events by inducing transcriptional silencing of tumor suppressor genes (TSGs) in colorectal cancer (CRC) cells in a ZNF304-dependent manner. This is GTPase KRas (KRAS) from Homo sapiens (Human).